We begin with the raw amino-acid sequence, 360 residues long: Carbamoyl phosphate synthase small chain (360 aa).

The interval 1 to 169 (MTKRLLILED…TKTAYPAPGI (169 aa)) is CPSase. L-glutamine contacts are provided by S46, G220, and G222. Residues 172-358 (NIVLVDFGLK…LEMIDSWRCT (187 aa)) form the Glutamine amidotransferase type-1 domain. C247 (nucleophile) is an active-site residue. Residues M248, Q251, N289, G291, and Y292 each contribute to the L-glutamine site. Catalysis depends on residues H331 and D333.

It belongs to the CarA family. In terms of assembly, composed of two chains; the small (or glutamine) chain promotes the hydrolysis of glutamine to ammonia, which is used by the large (or ammonia) chain to synthesize carbamoyl phosphate. Tetramer of heterodimers (alpha,beta)4.

It catalyses the reaction hydrogencarbonate + L-glutamine + 2 ATP + H2O = carbamoyl phosphate + L-glutamate + 2 ADP + phosphate + 2 H(+). The catalysed reaction is L-glutamine + H2O = L-glutamate + NH4(+). Its pathway is amino-acid biosynthesis; L-arginine biosynthesis; carbamoyl phosphate from bicarbonate: step 1/1. The protein operates within pyrimidine metabolism; UMP biosynthesis via de novo pathway; (S)-dihydroorotate from bicarbonate: step 1/3. Small subunit of the glutamine-dependent carbamoyl phosphate synthetase (CPSase). CPSase catalyzes the formation of carbamoyl phosphate from the ammonia moiety of glutamine, carbonate, and phosphate donated by ATP, constituting the first step of 2 biosynthetic pathways, one leading to arginine and/or urea and the other to pyrimidine nucleotides. The small subunit (glutamine amidotransferase) binds and cleaves glutamine to supply the large subunit with the substrate ammonia. The protein is Carbamoyl phosphate synthase small chain of Streptococcus pyogenes serotype M18 (strain MGAS8232).